We begin with the raw amino-acid sequence, 168 residues long: Ribosome maturation factor RimM (168 aa).

In terms of domain architecture, PRC barrel spans 93–167; that stretch reads ENEFYQSDLV…YITLNMPEFI (75 aa).

This sequence belongs to the RimM family. Binds ribosomal protein uS19.

The protein resides in the cytoplasm. In terms of biological role, an accessory protein needed during the final step in the assembly of 30S ribosomal subunit, possibly for assembly of the head region. Essential for efficient processing of 16S rRNA. May be needed both before and after RbfA during the maturation of 16S rRNA. It has affinity for free ribosomal 30S subunits but not for 70S ribosomes. The sequence is that of Ribosome maturation factor RimM from Wolbachia sp. subsp. Brugia malayi (strain TRS).